The primary structure comprises 179 residues: Archaemetzincin (179 aa).

Zn(2+) is bound at residue H128. E129 (proton acceptor) is an active-site residue. The Zn(2+) site is built by H132, H138, C139, C144, C163, and C166.

The protein belongs to the peptidase M54 family. Monomer. Zn(2+) serves as cofactor.

Its function is as follows. Probable zinc metalloprotease whose natural substrate is unknown. This is Archaemetzincin from Methanocaldococcus jannaschii (strain ATCC 43067 / DSM 2661 / JAL-1 / JCM 10045 / NBRC 100440) (Methanococcus jannaschii).